We begin with the raw amino-acid sequence, 349 residues long: MIEFDNLTYLHGKPQGTGLLKANPEDFVVVEDLGFEPDGEGEHILVRILKNGCNTRFVADALAKFLKIHSREVSFAGQKDKHAVTEQWLCARVPGKEMPDLSAFQLEGCQVLEYARHKRKLRLGALKGNAFTLVLREVSNRDDVEQRLIDICVKGVPNYFGAQRFGIGGSNLQGALRWAQTNTPVRDRNKRSFWLSAARSALFNQIVAERLKKADVNQVVDGDALQLAGRGSWFVATTEELAELQRRVNDKELMITAALPGSGEWGTQREALAFEQAAVAAETELQALLVREKVEAARRAMLLYPQQLSWNWWDDVTVEIRFWLPAGSFATSVVRELINTTGDYAHIAE.

Phenylalanine 27 is a substrate binding site. Residue aspartate 80 is the Nucleophile of the active site. Asparagine 129 provides a ligand contact to substrate. The 149-residue stretch at 155–303 (GVPNYFGAQR…VEAARRAMLL (149 aa)) folds into the TRUD domain. Phenylalanine 329 is a binding site for substrate.

This sequence belongs to the pseudouridine synthase TruD family.

It carries out the reaction uridine(13) in tRNA = pseudouridine(13) in tRNA. In terms of biological role, responsible for synthesis of pseudouridine from uracil-13 in transfer RNAs. The chain is tRNA pseudouridine synthase D from Shigella flexneri.